We begin with the raw amino-acid sequence, 294 residues long: uncharacterized protein (294 aa).

Belongs to the glycosyltransferase 2 family. WaaE/KdtX subfamily.

This is an uncharacterized protein from Rickettsia bellii (strain RML369-C).